We begin with the raw amino-acid sequence, 190 residues long: Syndecan-2-B (190 aa).

Residues 1 to 22 form the signal peptide; that stretch reads MRNVWLIVPFALLAAFSGETWA. Residues 23–136 lie on the Extracellular side of the membrane; that stretch reads QADRDLYIDS…NLFHRTEVLA (114 aa). The tract at residues 34-60 is disordered; the sequence is ESSGNYPVDDDDYSSGSGSGIPAHDDD. O-linked (Xyl...) (glycosaminoglycan) serine glycosylation is found at serine 36, serine 48, serine 50, and serine 52. A helical membrane pass occupies residues 137–157; it reads AVIAGGGIGFLFAVFLILLLV. The Cytoplasmic portion of the chain corresponds to 158 to 190; the sequence is YRMRKKDEGSYDLGERKPSSAVYQKAPTKEFYA. Residues 167–190 form a disordered region; that stretch reads SYDLGERKPSSAVYQKAPTKEFYA.

It belongs to the syndecan proteoglycan family. O-glycosylated; contains both heparan sulfate and chondroitin sulfate.

The protein resides in the membrane. Its function is as follows. Cell surface proteoglycan. The protein is Syndecan-2-B (sdc2-b) of Xenopus laevis (African clawed frog).